Reading from the N-terminus, the 467-residue chain is Mothers against decapentaplegic homolog 2 (467 aa).

Ser2 bears the N-acetylserine mark. Thr8 carries the phosphothreonine modification. Residues 10–176 (PVVKRLLGWK…YQRVETPVLP (167 aa)) enclose the MH1 domain. Lys19 carries the N6-acetyllysine modification. Zn(2+) contacts are provided by Cys74, Cys149, Cys161, and His166. Positions 207–217 (PAGIEPQSNYI) are enriched in polar residues. The interval 207 to 251 (PAGIEPQSNYIPETPPPGYISEDGETSDQQLNQSMDTGSPAELSP) is disordered. Thr220 bears the Phosphothreonine mark. The PY-motif signature appears at 221–225 (PPPGY). A compositionally biased stretch (polar residues) spans 233–243 (SDQQLNQSMDT). Ser240 carries the phosphoserine; by CAMK2 modification. Residues Ser245, Ser250, Ser255, Ser458, Ser460, and Ser464 each carry the phosphoserine modification. Positions 274–467 (WCSIAYYELN…SPSVRCSSMS (194 aa)) constitute an MH2 domain. 2 positions are modified to phosphoserine; by TGFBR1: Ser465 and Ser467.

It belongs to the dwarfin/SMAD family. Monomer; in the absence of TGF-beta. Heterodimer; in the presence of TGF-beta. Forms a heterodimer with co-SMAD, SMAD4, in the nucleus to form the transactivation complex SMAD2/SMAD4. Found in a complex with SMAD3 and TRIM33 upon addition of TGF-beta. Identified in a complex that contains at least ZNF451, SMAD2, SMAD3 and SMAD4. Interacts (via the MH2 domain) with ZFYVE9; may form trimers with the SMAD4 co-SMAD. Interacts with TAZ/WWRT1. Interacts with FOXH1. Interacts with SNW1. Interacts with CREB-binding protein (CBP) and EP300. Interacts with SNON. Interacts with ALK4/ACVR1B. Interacts with SKOR1. Interacts with SKOR2. Interacts with PRDM16. Interacts (via MH2 domain) with LEMD3. Interacts with RBPMS. Interacts with WWP1. Interacts (dephosphorylated form, via the MH1 and MH2 domains) with RANBP3 (via its C-terminal R domain); the interaction results in the export of dephosphorylated SMAD3 out of the nucleus and termination of the TGF-beta signaling. Interacts with PDPK1 (via PH domain). Interacts with DAB2; the interactions are enhanced upon TGF-beta stimulation. Interacts with USP15. Interacts with PPP5C. Interacts with LDLRAD4 (via the SMAD interaction motif). Interacts (via MH2 domain) with PMEPA1 (via the SMAD interaction motif). Interacts with ZFHX3. Interacts with ZNF451. Interacts with SMURF2 when phosphorylated on Ser-465/467. Interacts with PPM1A. Interacts with TGF-beta. Interacts with TGFBR1. Interacts with TGIF. Interacts with SMAD3 and TRIM33. Interacts with ZNF580. Interacts with NEDD4L in response to TGF-beta. Interacts with HGS. Interacts with AIP1. Interacts with WWP1. Interacts with PML. Interacts weakly with ZNF8. Interacts (when phosphorylated) with RNF111; RNF111 acts as an enhancer of the transcriptional responses by mediating ubiquitination and degradation of SMAD2 inhibitors. Interacts with YAP1 (when phosphorylated at 'Ser-112'). Interacts when phosphorylated with IPO7; the interaction facilitates translocation of SMAD2 to the nucleus. Interacts with MTMR4; negatively regulates TGF-beta signaling through SMAD2 dephosphorylation and retention in endosomes. In response to TGF-beta, phosphorylated on the C-terminal SXS motif by TGF-beta and activin type 1 receptor kinases, phosphorylation declines progressively in a KMT5A-dependent manner. Phosphorylation in this motif is required for interaction with a number of proteins including SMURF2, SNON and SMAD4 in response to TGF-beta. Dephosphorylated in this motif by PPM1A leading to disruption of the SMAD2/3-SMAD4 complex, nuclear export and termination of the TGF-beta signaling. In response to decorin, the naturally occurring inhibitor of TGF-beta signaling, phosphorylated on Ser-240 by CaMK2. Phosphorylated by MAPK3 upon EGF stimulation; which increases transcriptional activity and stability, and is blocked by calmodulin. Phosphorylated by PDPK1. In terms of processing, acetylated on Lys-19 by coactivators in response to TGF-beta signaling, which increases transcriptional activity. Post-translationally, in response to TGF-beta, ubiquitinated by NEDD4L; which promotes its degradation. Monoubiquitinated, leading to prevent DNA-binding. Deubiquitination by USP15 alleviates inhibition and promotes activation of TGF-beta target genes. Ubiquitinated by RNF111, leading to its degradation: only SMAD2 proteins that are 'in use' are targeted by RNF111, RNF111 playing a key role in activating SMAD2 and regulating its turnover. Expressed in cardiomyocytes.

Its subcellular location is the cytoplasm. It is found in the nucleus. Its function is as follows. Receptor-regulated SMAD (R-SMAD) that is an intracellular signal transducer and transcriptional modulator activated by TGF-beta (transforming growth factor) and activin type 1 receptor kinases. Binds the TRE element in the promoter region of many genes that are regulated by TGF-beta and, on formation of the SMAD2/SMAD4 complex, activates transcription. Promotes TGFB1-mediated transcription of odontoblastic differentiation genes in dental papilla cells. Positively regulates PDPK1 kinase activity by stimulating its dissociation from the 14-3-3 protein YWHAQ which acts as a negative regulator. In Rattus norvegicus (Rat), this protein is Mothers against decapentaplegic homolog 2 (Smad2).